Reading from the N-terminus, the 567-residue chain is MAEDSAGLPSNYQFWMQKLSVWTQASTLETQRDICLHLPQFQEFLRRMYETLKEMDSNAIIERFPTICQLLAKSCWSPFILAYDESPKILIWCLCCLIKKDPQNSRESKLNSWTRRLLSHIVSTSRFDIKEVGLFNQVLGYAPTDYYPGLLKNMVLSLVSELRENHLNGFSSQRRCPERVRSLSRDRVPLLTLPDFEPLVEALLTYHGHEPQEVLCPEFFDAVNEASLLKKISLPTSAILCLWLRHLPSLENTMLHLLEKLISSERNSLRRIKCFMKDSLRPEAAACHPAIFRVVDEIFRSALLETDGAPEVLAGLQVFTRCFVEALEKENKQLKFALKTYFPYASPALVMVLLQHPKDIPQGLWHQSLKHISEMLKEIVEDHGSYGGPFESWFLFVHFGGWADITAEQLLMSEAEAEPPEALLWLLAFSCSPGAGHQQRARTMVEVKTVLGCLTKLFRSPALSARDLQAAAGENLGGDPRPPACQQLVRRLLLHFLLWAPGGHTIAREVITLMAQTDAIMNEIIGFLDYTLYRWDHLCVEAHRSRKLARELLTELREQALPGQVNQ.

As to quaternary structure, belongs to the multisubunit FA complex composed of FANCA, FANCB, FANCC, FANCE, FANCF, FANCG, FANCL/PHF9 and FANCM. This complex may also include HSP70. Interacts with ZBTB32. Upon IFNG induction, interacts with STAT1. Interacts with CDK1. Interacts with EIF2AK2.

It is found in the nucleus. The protein resides in the cytoplasm. DNA repair protein that may operate in a postreplication repair or a cell cycle checkpoint function. May be implicated in interstrand DNA cross-link repair and in the maintenance of normal chromosome stability. Upon IFNG induction, may facilitate STAT1 activation by recruiting STAT1 to IFNGR1. The sequence is that of Fanconi anemia group C protein homolog (FANCC) from Bos taurus (Bovine).